The following is a 396-amino-acid chain: Argininosuccinate synthase (396 aa).

9–17 lines the ATP pocket; sequence AYSGGLDTS. Y85 contributes to the L-citrulline binding site. G115 contacts ATP. Positions 117, 121, and 122 each coordinate L-aspartate. N121 serves as a coordination point for L-citrulline. Residues R125, S173, E258, and Y270 each coordinate L-citrulline.

This sequence belongs to the argininosuccinate synthase family. Type 1 subfamily. As to quaternary structure, homotetramer.

Its subcellular location is the cytoplasm. The catalysed reaction is L-citrulline + L-aspartate + ATP = 2-(N(omega)-L-arginino)succinate + AMP + diphosphate + H(+). It functions in the pathway amino-acid biosynthesis; L-arginine biosynthesis; L-arginine from L-ornithine and carbamoyl phosphate: step 2/3. The polypeptide is Argininosuccinate synthase (Streptococcus agalactiae serotype Ia (strain ATCC 27591 / A909 / CDC SS700)).